The following is a 325-amino-acid chain: Ribosomal RNA small subunit methyltransferase H (325 aa).

S-adenosyl-L-methionine-binding positions include 32 to 34 (GGH), D52, F79, D100, and Q107.

The protein belongs to the methyltransferase superfamily. RsmH family.

The protein localises to the cytoplasm. The enzyme catalyses cytidine(1402) in 16S rRNA + S-adenosyl-L-methionine = N(4)-methylcytidine(1402) in 16S rRNA + S-adenosyl-L-homocysteine + H(+). In terms of biological role, specifically methylates the N4 position of cytidine in position 1402 (C1402) of 16S rRNA. This is Ribosomal RNA small subunit methyltransferase H from Oceanobacillus iheyensis (strain DSM 14371 / CIP 107618 / JCM 11309 / KCTC 3954 / HTE831).